The chain runs to 439 residues: MKETPLSNCERRFLLRAIEEKKRLDGRQTYDYRNIRISFGTDYGCCIVELGKTRVLGQVSCELVSPKLNRATEGILFFNLELSQMAAPAFEPGRQSDLLVKLNRLMERCLRNSKCIDTESLCVVAGEKVWQIRVDLHLLNHDGNIIDAASIAAIVALCHFRRPDVSVQGDEVTLYTPEERDPVPLSIHHMPICVSFAFFQQGTYLLVDPNEREERVMDGLLVIAMNKHREICTIQSSGGIMLLKDQVLRCSKIAGVKVAEITELILKALENDQKVRKEGGKFGFAESIANQRITAFKMEKAPIDTSDVEEKAEEIIAEAEPPSEVVSTPVLWTPGTAQIGEGVENSWGDLEDSEKEDDEGGGDQAIILDGIKMDTGVEVSDIGSQDAPIILSDSEEEEMIILEPDKNPKKIRTQTTSAKQEKAPSKKPVKRRKKKRAAN.

The segment at 1–268 (MKETPLSNCE…AEITELILKA (268 aa)) is ARE binding. S65 carries the phosphoserine modification. K297 carries the N6-acetyllysine; alternate modification. K297 is covalently cross-linked (Glycyl lysine isopeptide (Lys-Gly) (interchain with G-Cter in SUMO1); alternate). A Glycyl lysine isopeptide (Lys-Gly) (interchain with G-Cter in SUMO2); alternate cross-link involves residue K297. S306, V325, S327, and S346 each carry phosphoserine. 2 disordered regions span residues 335 to 363 (GTAQIGEGVENSWGDLEDSEKEDDEGGGD) and 391 to 439 (LSDS…RAAN). Over residues 349–361 (DLEDSEKEDDEGG) the composition is skewed to acidic residues. S392, S394, K409, and I411 each carry phosphoserine. Residue K419 forms a Glycyl lysine isopeptide (Lys-Gly) (interchain with G-Cter in SUMO2) linkage. Positions 425 to 439 (SKKPVKRRKKKRAAN) are enriched in basic residues.

This sequence belongs to the RNase PH family. Component of the RNA exosome core complex (Exo-9), composed of EXOSC1, EXOSC2, EXOSC3, EXOSC4, EXOSC5, EXOSC6, EXOSC7, EXOSC8 and EXOSC9; within the complex interacts with EXOSC3, EXOSC4, EXOSC5 and DIS3. The catalytically inactive RNA exosome core complex (Exo-9) associates with the catalytic subunit EXOSC10/RRP6. Exo-9 may associate with DIS3 to form the nucleolar exosome complex, or DIS3L to form the cytoplasmic exosome complex. Exo-9 is formed by a hexameric base ring consisting of the heterodimers EXOSC4-EXOSC9, EXOSC5-EXOSC8 and EXOSC6-EXOSC7, and a cap ring consisting of EXOSC1, EXOSC2 and EXOSC3. The RNA exosome complex associates with cofactors C1D/RRP47, MPHOSPH6/MPP6 and MTREX/MTR4. Interacts (via C-terminus region) with SETX (via N-terminus domain); the interaction enhances SETX sumoylation. Interacts with DIS3; the interaction is direct.

Its subcellular location is the cytoplasm. It localises to the nucleus. It is found in the nucleolus. The protein localises to the nucleoplasm. In terms of biological role, non-catalytic component of the RNA exosome complex which has 3'-&gt;5' exoribonuclease activity and participates in a multitude of cellular RNA processing and degradation events. In the nucleus, the RNA exosome complex is involved in proper maturation of stable RNA species such as rRNA, snRNA and snoRNA, in the elimination of RNA processing by-products and non-coding 'pervasive' transcripts, such as antisense RNA species and promoter-upstream transcripts (PROMPTs), and of mRNAs with processing defects, thereby limiting or excluding their export to the cytoplasm. The RNA exosome may be involved in Ig class switch recombination (CSR) and/or Ig variable region somatic hypermutation (SHM) by targeting AICDA deamination activity to transcribed dsDNA substrates. In the cytoplasm, the RNA exosome complex is involved in general mRNA turnover and specifically degrades inherently unstable mRNAs containing AU-rich elements (AREs) within their 3' untranslated regions, and in RNA surveillance pathways, preventing translation of aberrant mRNAs. It seems to be involved in degradation of histone mRNA. The catalytic inactive RNA exosome core complex of 9 subunits (Exo-9) is proposed to play a pivotal role in the binding and presentation of RNA for ribonucleolysis, and to serve as a scaffold for the association with catalytic subunits and accessory proteins or complexes. EXOSC9 binds to ARE-containing RNAs. The protein is Exosome complex component RRP45 (EXOSC9) of Homo sapiens (Human).